The primary structure comprises 509 residues: 4-aminobutyrate aminotransferase (509 aa).

166–167 (GS) lines the pyridoxal 5'-phosphate pocket. Residue R223 participates in substrate binding. Position 363 is an N6-(pyridoxal phosphate)lysine (K363). Pyridoxal 5'-phosphate is bound at residue T387.

It belongs to the class-III pyridoxal-phosphate-dependent aminotransferase family. As to quaternary structure, homodimer. The cofactor is pyridoxal 5'-phosphate.

The protein localises to the cytoplasm. It carries out the reaction 4-aminobutanoate + 2-oxoglutarate = succinate semialdehyde + L-glutamate. In terms of biological role, deaminates gamma-aminobutyric acid (GABA) to succinate-semialdehyde, which in turn is converted to succinate by the succinate semialdehyde dehydrogenase. Not required for the utilization of GABA as nitrogen source. The polypeptide is 4-aminobutyrate aminotransferase (GATA) (Mycosarcoma maydis (Corn smut fungus)).